A 217-amino-acid chain; its full sequence is MLCVKNVSLRLPESRLLTNVNFTVDKGDIVTLMGPSGCGKSTLFSWMIGALAEQFSCTGELWLNEQRIDILPTAQRQIGILFQDALLFDQFSVGQNLLLALPATLKGNARRNAVNDALERSGLEGAFHQDPATLSGGQRARVALLRALLAQPKALLLDEPFSRLDVALRDNFRQWVFSEVRALAIPVVQVTHDLQDVPADSSVLDMAQWSENYNKLR.

An ABC transporter domain is found at 2-216 (LCVKNVSLRL…AQWSENYNKL (215 aa)). 34–41 (GPSGCGKS) serves as a coordination point for ATP.

This sequence belongs to the ABC transporter superfamily.

In terms of biological role, probably part of a binding-protein-dependent transport system YnjCD. Probably responsible for energy coupling to the transport system. This is an uncharacterized protein from Escherichia coli (strain K12).